The sequence spans 346 residues: N-acetyl-gamma-glutamyl-phosphate reductase (346 aa).

Cys-149 is a catalytic residue.

It belongs to the NAGSA dehydrogenase family. Type 1 subfamily.

Its subcellular location is the cytoplasm. It carries out the reaction N-acetyl-L-glutamate 5-semialdehyde + phosphate + NADP(+) = N-acetyl-L-glutamyl 5-phosphate + NADPH + H(+). It participates in amino-acid biosynthesis; L-arginine biosynthesis; N(2)-acetyl-L-ornithine from L-glutamate: step 3/4. Its function is as follows. Catalyzes the NADPH-dependent reduction of N-acetyl-5-glutamyl phosphate to yield N-acetyl-L-glutamate 5-semialdehyde. The sequence is that of N-acetyl-gamma-glutamyl-phosphate reductase from Pelobacter propionicus (strain DSM 2379 / NBRC 103807 / OttBd1).